A 564-amino-acid polypeptide reads, in one-letter code: Dihydroxy-acid dehydratase (564 aa).

Cys51 contributes to the [2Fe-2S] cluster binding site. Position 83 (Asp83) interacts with Mg(2+). Cys124 serves as a coordination point for [2Fe-2S] cluster. Mg(2+) contacts are provided by Asp125 and Lys126. Lys126 carries the N6-carboxylysine modification. Cys196 serves as a coordination point for [2Fe-2S] cluster. Glu448 lines the Mg(2+) pocket. Ser474 serves as the catalytic Proton acceptor.

It belongs to the IlvD/Edd family. As to quaternary structure, homodimer. [2Fe-2S] cluster serves as cofactor. Mg(2+) is required as a cofactor.

The enzyme catalyses (2R)-2,3-dihydroxy-3-methylbutanoate = 3-methyl-2-oxobutanoate + H2O. The catalysed reaction is (2R,3R)-2,3-dihydroxy-3-methylpentanoate = (S)-3-methyl-2-oxopentanoate + H2O. It participates in amino-acid biosynthesis; L-isoleucine biosynthesis; L-isoleucine from 2-oxobutanoate: step 3/4. Its pathway is amino-acid biosynthesis; L-valine biosynthesis; L-valine from pyruvate: step 3/4. Functionally, functions in the biosynthesis of branched-chain amino acids. Catalyzes the dehydration of (2R,3R)-2,3-dihydroxy-3-methylpentanoate (2,3-dihydroxy-3-methylvalerate) into 2-oxo-3-methylpentanoate (2-oxo-3-methylvalerate) and of (2R)-2,3-dihydroxy-3-methylbutanoate (2,3-dihydroxyisovalerate) into 2-oxo-3-methylbutanoate (2-oxoisovalerate), the penultimate precursor to L-isoleucine and L-valine, respectively. This is Dihydroxy-acid dehydratase from Polynucleobacter asymbioticus (strain DSM 18221 / CIP 109841 / QLW-P1DMWA-1) (Polynucleobacter necessarius subsp. asymbioticus).